The chain runs to 354 residues: Protein sex-lethal (354 aa).

Positions 1 to 21 are disordered; that stretch reads MYGNNNPGSNNNNGGYPPYGY. 2 RRM domains span residues 125–203 and 211–291; these read TNLI…YARP and TNLY…LAEE.

In terms of assembly, part of a complex containing fl(2)d, Sxl and vir. Part of a complex composed of at least mei-P26, bam, bgcn and Sxl; this complex is involved in translational repression of nanos mRNA. interacts with mei-p26. Interacts with nito. Interacts with Unr; cooperates with Unr to prevent translation of msl-2 transcripts. Interacts with how; promoting nuclear retention of msl-2 transcripts. Expressed in somatic tissues, but not in the pole cells, which are the precursors of the germline. Expressed in the anterior of the germarium.

The protein resides in the nucleus. Its subcellular location is the cytoplasm. Functionally, sex determination switch protein, which controls sexual development and dosage compensation in females. Sxl protein is only active in females: it is inactive in males throughout development. Acts as a mRNA-binding protein, which specifically binds to a subset of pre-mRNAs and mRNAs and regulates their processing and/or translation. Binds nanos mRNA and is involved in bam-bgcn mediated repression of nanos mRNA translation. Promotes sexual development by controlling the female-specific alternative splicing of the transformer (tra) pre-mRNA: binds tightly to a characteristic uridine-rich polypyrimidine tract at the non-sex specific 3' splice site in one of the tra introns, preventing the general splicing factor U2AF from binding to this site and forcing it to bind to the female-specific 3' splice site. Acts as an inhibitor of dosage compensation in females by preventing production of msl-2 protein, an essential component of the MSL complex, the complex that mediates X-chromosome dosage compensation. Specifically binds to uridine stretches in both the 5'- and 3'-UTR of msl-2 transcripts. Sxl first acts at the splicing level by promoting retention of an intron in the 5' UTR of msl-2 pre-mRNA. The retained intron contains Sxl-binding sites that are required for subsequent steps of repression: after msl-2 mRNA export into the cytoplasm, Sxl coordinates its translational repression by targeting early steps of translation initiation. Together with how, Sxl also prevents production of msl-2 protein by preventing nuclear export of msl-2 transcripts. Its function is as follows. Embryo-specific product, which is expressed early only in female embryos and specifies female-adult specific splicing. This chain is Protein sex-lethal, found in Drosophila melanogaster (Fruit fly).